A 226-amino-acid chain; its full sequence is uncharacterized protein (226 aa).

The 59-residue stretch at 168-226 (ISALRNKLGLTQTDLGKRINVDANVIRNIETGDLVAFNVQDPMVRSLAYALGIRTIKYQ) folds into the HTH cro/C1-type domain. The H-T-H motif DNA-binding region spans 179–198 (QTDLGKRINVDANVIRNIET).

This is an uncharacterized protein from Acanthamoeba polyphaga mimivirus (APMV).